Reading from the N-terminus, the 314-residue chain is Porphobilinogen deaminase (314 aa).

Position 234 is an S-(dipyrrolylmethanemethyl)cysteine (cysteine 234).

This sequence belongs to the HMBS family. In terms of assembly, monomer. The cofactor is dipyrromethane.

It carries out the reaction 4 porphobilinogen + H2O = hydroxymethylbilane + 4 NH4(+). It participates in porphyrin-containing compound metabolism; protoporphyrin-IX biosynthesis; coproporphyrinogen-III from 5-aminolevulinate: step 2/4. Tetrapolymerization of the monopyrrole PBG into the hydroxymethylbilane pre-uroporphyrinogen in several discrete steps. This chain is Porphobilinogen deaminase, found in Mycobacterium ulcerans (strain Agy99).